The following is a 504-amino-acid chain: Probable cytosol aminopeptidase (504 aa).

Positions 276 and 281 each coordinate Mn(2+). Lys288 is an active-site residue. Residues Asp299, Asp358, and Glu360 each contribute to the Mn(2+) site. The active site involves Arg362.

It belongs to the peptidase M17 family. It depends on Mn(2+) as a cofactor.

The protein localises to the cytoplasm. It carries out the reaction Release of an N-terminal amino acid, Xaa-|-Yaa-, in which Xaa is preferably Leu, but may be other amino acids including Pro although not Arg or Lys, and Yaa may be Pro. Amino acid amides and methyl esters are also readily hydrolyzed, but rates on arylamides are exceedingly low.. The enzyme catalyses Release of an N-terminal amino acid, preferentially leucine, but not glutamic or aspartic acids.. Its function is as follows. Presumably involved in the processing and regular turnover of intracellular proteins. Catalyzes the removal of unsubstituted N-terminal amino acids from various peptides. The polypeptide is Probable cytosol aminopeptidase (Bordetella avium (strain 197N)).